Consider the following 330-residue polypeptide: AH receptor-interacting protein (330 aa).

Residue Ser43 is modified to Phosphoserine. The region spanning 54–146 is the PPIase FKBP-type domain; the sequence is RVRGKPMELI…DLDALQQNPQ (93 aa). 3 TPR repeats span residues 179–212, 231–264, and 265–298; these read VPVI…LKNL, TPLL…YDDN, and VKAY…DPAM.

As to quaternary structure, interacts with RET in the pituitary gland; this interaction prevents the formation of the AIP-survivin complex.

Its subcellular location is the cytoplasm. Functionally, may play a positive role in AHR-mediated (aromatic hydrocarbon receptor) signaling, possibly by influencing its receptivity for ligand and/or its nuclear targeting. The polypeptide is AH receptor-interacting protein (AIP) (Bos taurus (Bovine)).